The chain runs to 251 residues: Pyrroline-5-carboxylate reductase (251 aa).

Belongs to the pyrroline-5-carboxylate reductase family.

The protein localises to the cytoplasm. It carries out the reaction L-proline + NADP(+) = (S)-1-pyrroline-5-carboxylate + NADPH + 2 H(+). The catalysed reaction is L-proline + NAD(+) = (S)-1-pyrroline-5-carboxylate + NADH + 2 H(+). The protein operates within amino-acid biosynthesis; L-proline biosynthesis; L-proline from L-glutamate 5-semialdehyde: step 1/1. In terms of biological role, catalyzes the reduction of 1-pyrroline-5-carboxylate (PCA) to L-proline. The protein is Pyrroline-5-carboxylate reductase (proC) of Methanobrevibacter smithii.